The chain runs to 254 residues: Persulfide dioxygenase ETHE1, mitochondrial (254 aa).

The N-terminal 7 residues, 1–7 (MAEAVLR), are a transit peptide targeting the mitochondrion. A phosphoserine mark is found at serine 14 and serine 19. Lysine 66 is subject to N6-acetyllysine. Fe cation contacts are provided by histidine 79, histidine 135, and aspartate 154. Lysine 172 is modified (N6-acetyllysine; alternate). An N6-succinyllysine; alternate modification is found at lysine 172.

It belongs to the metallo-beta-lactamase superfamily. Glyoxalase II family. In terms of assembly, homodimer. Monomer. Interacts with TST. May interact with RELA. Fe(2+) serves as cofactor. In terms of tissue distribution, ubiquitously expressed.

It is found in the cytoplasm. It localises to the nucleus. Its subcellular location is the mitochondrion matrix. The catalysed reaction is S-sulfanylglutathione + O2 + H2O = sulfite + glutathione + 2 H(+). Glutathione increases enzyme activity. Sulfur dioxygenase that plays an essential role in hydrogen sulfide catabolism in the mitochondrial matrix. Hydrogen sulfide (H(2)S) is first oxidized by SQRDL, giving rise to cysteine persulfide residues. ETHE1 consumes molecular oxygen to catalyze the oxidation of the persulfide, once it has been transferred to a thiophilic acceptor, such as glutathione (R-SSH). Plays an important role in metabolic homeostasis in mitochondria by metabolizing hydrogen sulfide and preventing the accumulation of supraphysiological H(2)S levels that have toxic effects, due to the inhibition of cytochrome c oxidase. First described as a protein that can shuttle between the nucleus and the cytoplasm and suppress p53-induced apoptosis by sequestering the transcription factor RELA/NFKB3 in the cytoplasm and preventing its accumulation in the nucleus. This chain is Persulfide dioxygenase ETHE1, mitochondrial (ETHE1), found in Homo sapiens (Human).